The following is a 568-amino-acid chain: Potassium-transporting ATPase potassium-binding subunit (568 aa).

10 consecutive transmembrane segments (helical) span residues 7-27, 65-85, 135-155, 177-197, 254-274, 286-306, 383-403, 422-442, 489-509, and 530-550; these read AEIA…GLFL, SYAL…YAIL, AGLT…AAAV, VSLY…VALG, LTNL…VVAF, ALIT…YWTE, GLYG…LMVG, MLAV…AAVL, LGIA…AIAG, and LFIG…FFPA.

Belongs to the KdpA family. The system is composed of three essential subunits: KdpA, KdpB and KdpC.

It localises to the cell inner membrane. Its function is as follows. Part of the high-affinity ATP-driven potassium transport (or Kdp) system, which catalyzes the hydrolysis of ATP coupled with the electrogenic transport of potassium into the cytoplasm. This subunit binds the periplasmic potassium ions and delivers the ions to the membrane domain of KdpB through an intramembrane tunnel. The protein is Potassium-transporting ATPase potassium-binding subunit of Beijerinckia indica subsp. indica (strain ATCC 9039 / DSM 1715 / NCIMB 8712).